A 277-amino-acid chain; its full sequence is Basic leucine zipper transcriptional factor ATF-like 2 (277 aa).

Disordered regions lie at residues 15 to 50, 126 to 146, and 191 to 256; these read LGES…HQQH, FQTP…CSHE, and SFSK…QKSS. Residues 18–81 enclose the bZIP domain; that stretch reads SQKQLKKKQK…AGWGRTLHLH (64 aa). Positions 20-42 are basic motif; that stretch reads KQLKKKQKNRVAAQRSRQKHTSK. Over residues 41-50 the composition is skewed to basic and acidic residues; the sequence is SKADALHQQH. Residues 46–67 are leucine-zipper; the sequence is LHQQHESLEKQNHALRKEIQAL. Composition is skewed to polar residues over residues 213 to 227 and 247 to 256; these read RQEQ…SSDS and GSSTHWQKSS.

The protein belongs to the bZIP family. As to quaternary structure, heterodimer; heterodimerizes with JUN family proteins.

The protein localises to the nucleus. Its function is as follows. AP-1 family transcription factor that controls the differentiation of lineage-specific cells in the immune system. Selectively suppresses CCN1 transcription and hence blocks the downstream cell proliferation signals produced by CCN1 and inhibits CCN1-induced anchorage-independent growth and invasion in several cancer types. Possibly acts by interfering with AP-1 binding to CCN1 promoter. Following infection, participates in the differentiation of CD8(+) thymic conventional dendritic cells in the immune system. Acts via the formation of a heterodimer with JUN family proteins that recognizes and binds DNA sequence 5'-TGA[CG]TCA-3' and regulates expression of target genes. In Mus musculus (Mouse), this protein is Basic leucine zipper transcriptional factor ATF-like 2 (Batf2).